Reading from the N-terminus, the 136-residue chain is Active regulator of SIRT1 (136 aa).

R7 carries the post-translational modification Citrulline. Residues 13 to 58 (LAASEAPRDPPGQAKPRGAPVKRPRKTKAIQAQKLRNSAKGKVPKS) are disordered. S84 carries the phosphoserine modification.

The protein belongs to the AROS family. Part of the small subunit (SSU) processome, composed of more than 70 proteins and the RNA chaperone small nucleolar RNA (snoRNA) U3. Interacts with RPS19; the interaction is direct and mediates the integration of RPS19 in state post-A1. Interacts with SIRT1. In terms of processing, citrullinated by PADI4. As to expression, widely expressed (at protein level).

It localises to the nucleus. The protein localises to the nucleolus. Part of the small subunit (SSU) processome, first precursor of the small eukaryotic ribosomal subunit. During the assembly of the SSU processome in the nucleolus, many ribosome biogenesis factors, an RNA chaperone and ribosomal proteins associate with the nascent pre-rRNA and work in concert to generate RNA folding, modifications, rearrangements and cleavage as well as targeted degradation of pre-ribosomal RNA by the RNA exosome. Acts as a chaperone that specifically mediates the integration of RPS19 in state post-A1. Direct regulator of SIRT1. Enhances SIRT1-mediated deacetylation of p53/TP53, thereby participating in inhibition of p53/TP53-mediated transcriptional activity. In Homo sapiens (Human), this protein is Active regulator of SIRT1.